The primary structure comprises 207 residues: Succinyl-CoA:3-ketoacid coenzyme A transferase subunit B (207 aa).

Residue E43 is part of the active site.

It belongs to the 3-oxoacid CoA-transferase subunit B family. In terms of assembly, heterodimer of a subunit A and a subunit B.

It carries out the reaction a 3-oxo acid + succinyl-CoA = a 3-oxoacyl-CoA + succinate. The protein is Succinyl-CoA:3-ketoacid coenzyme A transferase subunit B (scoB) of Helicobacter pylori (strain J99 / ATCC 700824) (Campylobacter pylori J99).